The following is a 92-amino-acid chain: Small ribosomal subunit protein uS19 (92 aa).

It belongs to the universal ribosomal protein uS19 family.

Its function is as follows. Protein S19 forms a complex with S13 that binds strongly to the 16S ribosomal RNA. This chain is Small ribosomal subunit protein uS19, found in Lactococcus lactis subsp. lactis (strain IL1403) (Streptococcus lactis).